We begin with the raw amino-acid sequence, 394 residues long: Elongation factor Tu (394 aa).

The 195-residue stretch at Lys-10–Glu-204 folds into the tr-type G domain. The interval Gly-19–Thr-26 is G1. Gly-19–Thr-26 provides a ligand contact to GTP. Thr-26 provides a ligand contact to Mg(2+). A G2 region spans residues Gly-60–Asn-64. The interval Asp-81–Gly-84 is G3. GTP-binding positions include Asp-81–His-85 and Asn-136–Asp-139. A G4 region spans residues Asn-136 to Asp-139. A G5 region spans residues Ser-174–Leu-176.

This sequence belongs to the TRAFAC class translation factor GTPase superfamily. Classic translation factor GTPase family. EF-Tu/EF-1A subfamily. As to quaternary structure, monomer.

The protein localises to the cytoplasm. The catalysed reaction is GTP + H2O = GDP + phosphate + H(+). In terms of biological role, GTP hydrolase that promotes the GTP-dependent binding of aminoacyl-tRNA to the A-site of ribosomes during protein biosynthesis. This is Elongation factor Tu from Shewanella sp. (strain ANA-3).